Here is a 467-residue protein sequence, read N- to C-terminus: Putative alpha-amylase (467 aa).

The active-site Nucleophile is Glu-145.

Belongs to the glycosyl hydrolase 57 family.

The catalysed reaction is Endohydrolysis of (1-&gt;4)-alpha-D-glucosidic linkages in polysaccharides containing three or more (1-&gt;4)-alpha-linked D-glucose units.. In Methanocaldococcus jannaschii (strain ATCC 43067 / DSM 2661 / JAL-1 / JCM 10045 / NBRC 100440) (Methanococcus jannaschii), this protein is Putative alpha-amylase.